We begin with the raw amino-acid sequence, 353 residues long: UDP-N-acetylglucosamine--N-acetylmuramyl-(pentapeptide) pyrophosphoryl-undecaprenol N-acetylglucosamine transferase (353 aa).

UDP-N-acetyl-alpha-D-glucosamine contacts are provided by residues 10–12 (TGG), asparagine 124, serine 183, and glutamine 283.

The protein belongs to the glycosyltransferase 28 family. MurG subfamily.

The protein resides in the cell inner membrane. The enzyme catalyses di-trans,octa-cis-undecaprenyl diphospho-N-acetyl-alpha-D-muramoyl-L-alanyl-D-glutamyl-meso-2,6-diaminopimeloyl-D-alanyl-D-alanine + UDP-N-acetyl-alpha-D-glucosamine = di-trans,octa-cis-undecaprenyl diphospho-[N-acetyl-alpha-D-glucosaminyl-(1-&gt;4)]-N-acetyl-alpha-D-muramoyl-L-alanyl-D-glutamyl-meso-2,6-diaminopimeloyl-D-alanyl-D-alanine + UDP + H(+). It functions in the pathway cell wall biogenesis; peptidoglycan biosynthesis. Its function is as follows. Cell wall formation. Catalyzes the transfer of a GlcNAc subunit on undecaprenyl-pyrophosphoryl-MurNAc-pentapeptide (lipid intermediate I) to form undecaprenyl-pyrophosphoryl-MurNAc-(pentapeptide)GlcNAc (lipid intermediate II). The sequence is that of UDP-N-acetylglucosamine--N-acetylmuramyl-(pentapeptide) pyrophosphoryl-undecaprenol N-acetylglucosamine transferase from Helicobacter pylori (strain HPAG1).